Consider the following 449-residue polypeptide: MRSQWLKNRKNDKTPTQMYYAKNGIITEEMRYVAKIEQMDAEILRSEVARGKTIIPANINHTNLVPMGIGRSLKCKINSNIGSSSVSSGVEEEVEKLKISIKYGADTVMDLSTGGDLNEIRTQIIKNSTVPIGTVPIYQIIHDVGSIENLTISQMLKTIENQAIQGVSYFTIHAGFLLEFMPLVAKRKMGIVSRGGSLMATWMMKNHKENPFFTAFDEILEICAKYDVSLSLGDSLRPGCIYDASDAAQISELKILGDLARRAWTKNVQVMIEGPGHVPFNEIASNMQLERVLCDDAPFYVLGPLPTDIGAGYDHITSAIGGTMAAFSGASMLCYVTPKEHLGLPNAKDVREGIVAHKIAAHIADVALGKKGAIERDHAMSDARYNFDWNKQFELSLDPDRAKEYHDETLPQEVFKEAEFCSMCGPKFCAYKISREISKNSCEFYKECK.

Substrate is bound by residues Asn80, Met109, Tyr138, His173, 193–195 (SRG), 234–237 (DSLR), and Glu273. His277 lines the Zn(2+) pocket. Tyr300 serves as a coordination point for substrate. His341 contacts Zn(2+). [4Fe-4S] cluster-binding residues include Cys421, Cys424, and Cys429.

It belongs to the ThiC family. As to quaternary structure, homodimer. It depends on [4Fe-4S] cluster as a cofactor.

The catalysed reaction is 5-amino-1-(5-phospho-beta-D-ribosyl)imidazole + S-adenosyl-L-methionine = 4-amino-2-methyl-5-(phosphooxymethyl)pyrimidine + CO + 5'-deoxyadenosine + formate + L-methionine + 3 H(+). The protein operates within cofactor biosynthesis; thiamine diphosphate biosynthesis. Functionally, catalyzes the synthesis of the hydroxymethylpyrimidine phosphate (HMP-P) moiety of thiamine from aminoimidazole ribotide (AIR) in a radical S-adenosyl-L-methionine (SAM)-dependent reaction. In Campylobacter hominis (strain ATCC BAA-381 / DSM 21671 / CCUG 45161 / LMG 19568 / NCTC 13146 / CH001A), this protein is Phosphomethylpyrimidine synthase.